The sequence spans 133 residues: U-scoloptoxin(05)-Sa1a (133 aa).

The first 24 residues, Met-1–Thr-24, serve as a signal peptide directing secretion.

Belongs to the scoloptoxin-05 family. Post-translationally, contains 5 disulfide bonds. Expressed by the venom gland.

It is found in the secreted. The chain is U-scoloptoxin(05)-Sa1a from Scolopendra alternans (Florida Keys giant centipede).